Consider the following 80-residue polypeptide: Moroidotoxin A (80 aa).

An N-terminal signal peptide occupies residues 1–27 (MAAVKKHLRFALVAAITIALLVAGSVA). Residues 28–44 (DESSEDIDNIVIKTPLD) constitute a propeptide that is removed on maturation. 3 cysteine pairs are disulfide-bonded: cysteine 48/cysteine 65, cysteine 53/cysteine 67, and cysteine 61/cysteine 76.

It belongs to the gympietide family. Expressed in trichomes, that are stiff epidermal hairs located on the surface of petioles and leaves. Not expressed in other aerial parts.

The protein localises to the secreted. Neurotoxin certainly responsible for the defensive, persistent, and painful stings of the giant stinging tree. Inhibits inactivation of Nav1.7/SCN9A sodium channel in sensory neurons by directly interacting with TMEM233, a newly described Nav-interacting protein. Has virtually no effect on Nav1.7/SCN9A function in heterologous expression systems and in neurons that do not express TMEM233. Also weakly but significantly affects Nav1.8/SCN10A. Coexpression of TMEM233 with Nav also confers ExTxA sensitivity to Nav1.1-Nav1.6. On the Nav1.7/SCN9A channel, causes a significant hyperpolarizing shift in the voltage dependence of activation. Its effects on Nav currents are irreversible, with no apparent reduction in activity even after repeated wash steps over 30 minutes. In vivo, induces nocifensive behavior in mice (licking or biting and shaking or lifting of the affected paw) lasting for approximately 1 hour. The chain is Moroidotoxin A from Dendrocnide moroides (Gympie stinging tree).